The following is a 331-amino-acid chain: Mitochondrial carrier protein CoAc1 (331 aa).

6 consecutive transmembrane segments (helical) span residues leucine 16 to isoleucine 36, phenylalanine 79 to methionine 99, leucine 123 to alanine 143, glycine 193 to glutamate 213, leucine 231 to valine 251, and phenylalanine 292 to valine 312. 3 Solcar repeats span residues proline 21–tryptophan 107, serine 117–histidine 218, and asparagine 225–tryptophan 319.

It belongs to the mitochondrial carrier (TC 2.A.29) family. Expressed throughout the plant.

The protein localises to the mitochondrion inner membrane. Its function is as follows. Required for the accumulation of coenzyme A in the mitochondrial matrix. The sequence is that of Mitochondrial carrier protein CoAc1 from Arabidopsis thaliana (Mouse-ear cress).